We begin with the raw amino-acid sequence, 461 residues long: MTDTRKQRAAVILAAGKGTRMKSPLPKVMHAVGGRPMMDWSIALARQVGAERIVAVVHPSQDVLIAHLGKHHPDVAIAYQDPPQGTGHAVRCAEEALRGFEGDLAVLYGDSPLVPAATIEDLFGTLSDKTGLGVLGFEAEDPGLYGRLITGEDGSLEAIVEAREATPFQLRVRLCNSGVMAGRAADMFRLLAKVTNSNAKGEYYLTDLVGLARAEGIRCAVAVSGEDDLIGCDSKADLAEAEAIFQQKRRRALMEAGVTMVAPETVFLSHDTQIGADAVIEPNVVFGPGVKVAGGAQIRAFSHLEGAVVGEGCSVGPYARLRPGTVLAANVHIGNFVETKNTAMGEGAKANHLAYLGDGTIGAGANIGAGTIFCNYDGFLKHQTDVGEGAFVGSNSALVAPVRIGDGAYIGSGSVITKDVPDDALAVGRGQQITREGWARNYRAKKAAEKAARTTDQNKKG.

The pyrophosphorylase stretch occupies residues 1-235 (MTDTRKQRAA…EDDLIGCDSK (235 aa)). UDP-N-acetyl-alpha-D-glucosamine-binding positions include 13–16 (LAAG), K27, Q80, 85–86 (GT), 108–110 (YGD), G146, E161, and N176. Position 110 (D110) interacts with Mg(2+). The interval 236-256 (ADLAEAEAIFQQKRRRALMEA) is linker. Positions 257-461 (GVTMVAPETV…ARTTDQNKKG (205 aa)) are N-acetyltransferase. The UDP-N-acetyl-alpha-D-glucosamine site is built by R322 and K340. The active-site Proton acceptor is the H352. Residues Y355 and N366 each contribute to the UDP-N-acetyl-alpha-D-glucosamine site. Acetyl-CoA-binding positions include A369, 375 to 376 (NY), S394, S412, and R429.

It in the N-terminal section; belongs to the N-acetylglucosamine-1-phosphate uridyltransferase family. The protein in the C-terminal section; belongs to the transferase hexapeptide repeat family. As to quaternary structure, homotrimer. It depends on Mg(2+) as a cofactor.

The protein localises to the cytoplasm. It carries out the reaction alpha-D-glucosamine 1-phosphate + acetyl-CoA = N-acetyl-alpha-D-glucosamine 1-phosphate + CoA + H(+). The enzyme catalyses N-acetyl-alpha-D-glucosamine 1-phosphate + UTP + H(+) = UDP-N-acetyl-alpha-D-glucosamine + diphosphate. Its pathway is nucleotide-sugar biosynthesis; UDP-N-acetyl-alpha-D-glucosamine biosynthesis; N-acetyl-alpha-D-glucosamine 1-phosphate from alpha-D-glucosamine 6-phosphate (route II): step 2/2. It functions in the pathway nucleotide-sugar biosynthesis; UDP-N-acetyl-alpha-D-glucosamine biosynthesis; UDP-N-acetyl-alpha-D-glucosamine from N-acetyl-alpha-D-glucosamine 1-phosphate: step 1/1. It participates in bacterial outer membrane biogenesis; LPS lipid A biosynthesis. Functionally, catalyzes the last two sequential reactions in the de novo biosynthetic pathway for UDP-N-acetylglucosamine (UDP-GlcNAc). The C-terminal domain catalyzes the transfer of acetyl group from acetyl coenzyme A to glucosamine-1-phosphate (GlcN-1-P) to produce N-acetylglucosamine-1-phosphate (GlcNAc-1-P), which is converted into UDP-GlcNAc by the transfer of uridine 5-monophosphate (from uridine 5-triphosphate), a reaction catalyzed by the N-terminal domain. In Hyphomonas neptunium (strain ATCC 15444), this protein is Bifunctional protein GlmU.